Here is a 157-residue protein sequence, read N- to C-terminus: Small ribosomal subunit protein bS16 (157 aa).

The interval 114 to 157 (NEGPTAEAITEKKKKAKEEAAAKAAAEAEAAAKAEEAPAEEAAE) is disordered.

It belongs to the bacterial ribosomal protein bS16 family.

In Corynebacterium diphtheriae (strain ATCC 700971 / NCTC 13129 / Biotype gravis), this protein is Small ribosomal subunit protein bS16.